A 270-amino-acid polypeptide reads, in one-letter code: Glucosamine-6-phosphate deaminase (270 aa).

The Proton acceptor; for enolization step role is filled by D72. D141 serves as the catalytic For ring-opening step. Catalysis depends on H143, which acts as the Proton acceptor; for ring-opening step. Residue E148 is the For ring-opening step of the active site.

The protein belongs to the glucosamine/galactosamine-6-phosphate isomerase family. NagB subfamily.

It carries out the reaction alpha-D-glucosamine 6-phosphate + H2O = beta-D-fructose 6-phosphate + NH4(+). It participates in amino-sugar metabolism; N-acetylneuraminate degradation; D-fructose 6-phosphate from N-acetylneuraminate: step 5/5. With respect to regulation, allosterically activated by N-acetylglucosamine 6-phosphate (GlcNAc6P). Functionally, catalyzes the reversible isomerization-deamination of glucosamine 6-phosphate (GlcN6P) to form fructose 6-phosphate (Fru6P) and ammonium ion. The protein is Glucosamine-6-phosphate deaminase of Treponema denticola (strain ATCC 35405 / DSM 14222 / CIP 103919 / JCM 8153 / KCTC 15104).